The chain runs to 102 residues: MSDSTLTRMDLAEAVFREVGLSRHESAQLVESVLGHISDALVRGEQVKISSFGTFSVRDKNERIGRNPKTGEEVPITPRRVLSFRPSHLMKDRVAAGNRRKG.

Belongs to the bacterial histone-like protein family. Heterodimer of an alpha and a beta chain.

Its function is as follows. This protein is one of the two subunits of integration host factor, a specific DNA-binding protein that functions in genetic recombination as well as in transcriptional and translational control. In Paracoccus denitrificans (strain Pd 1222), this protein is Integration host factor subunit alpha.